We begin with the raw amino-acid sequence, 80 residues long: DNA-binding protein HU-like (80 aa).

Belongs to the bacterial histone-like protein family.

Histone-like DNA-binding protein which is capable of wrapping DNA to stabilize it, and thus to prevent its denaturation under extreme environmental conditions. This is DNA-binding protein HU-like from Rickettsia conorii (strain ATCC VR-613 / Malish 7).